Consider the following 190-residue polypeptide: Large ribosomal subunit protein uL10 (190 aa).

This sequence belongs to the universal ribosomal protein uL10 family. Part of the ribosomal stalk of the 50S ribosomal subunit. The N-terminus interacts with L11 and the large rRNA to form the base of the stalk. The C-terminus forms an elongated spine to which L12 dimers bind in a sequential fashion forming a multimeric L10(L12)X complex.

In terms of biological role, forms part of the ribosomal stalk, playing a central role in the interaction of the ribosome with GTP-bound translation factors. This Trichodesmium erythraeum (strain IMS101) protein is Large ribosomal subunit protein uL10.